The following is a 253-amino-acid chain: Imidazole glycerol phosphate synthase subunit HisF (253 aa).

Residues D12 and D131 contribute to the active site.

This sequence belongs to the HisA/HisF family. As to quaternary structure, heterodimer of HisH and HisF.

It is found in the cytoplasm. The catalysed reaction is 5-[(5-phospho-1-deoxy-D-ribulos-1-ylimino)methylamino]-1-(5-phospho-beta-D-ribosyl)imidazole-4-carboxamide + L-glutamine = D-erythro-1-(imidazol-4-yl)glycerol 3-phosphate + 5-amino-1-(5-phospho-beta-D-ribosyl)imidazole-4-carboxamide + L-glutamate + H(+). It participates in amino-acid biosynthesis; L-histidine biosynthesis; L-histidine from 5-phospho-alpha-D-ribose 1-diphosphate: step 5/9. Its function is as follows. IGPS catalyzes the conversion of PRFAR and glutamine to IGP, AICAR and glutamate. The HisF subunit catalyzes the cyclization activity that produces IGP and AICAR from PRFAR using the ammonia provided by the HisH subunit. This Corynebacterium urealyticum (strain ATCC 43042 / DSM 7109) protein is Imidazole glycerol phosphate synthase subunit HisF.